The following is a 484-amino-acid chain: uncharacterized protein (484 aa).

Residues 47 to 226 enclose the FAD-binding PCMH-type domain; sequence TLPIPAAVVK…TEVTVKIFKF (180 aa).

It belongs to the FAD-binding oxidoreductase/transferase type 4 family.

This is an uncharacterized protein from Escherichia coli (strain K12).